The following is a 271-amino-acid chain: Acetylglutamate kinase (271 aa).

Substrate-binding positions include 41–42 (GG), R63, and N166.

This sequence belongs to the acetylglutamate kinase family. ArgB subfamily.

Its subcellular location is the cytoplasm. It catalyses the reaction N-acetyl-L-glutamate + ATP = N-acetyl-L-glutamyl 5-phosphate + ADP. It participates in amino-acid biosynthesis; L-arginine biosynthesis; N(2)-acetyl-L-ornithine from L-glutamate: step 2/4. Catalyzes the ATP-dependent phosphorylation of N-acetyl-L-glutamate. This is Acetylglutamate kinase from Anaeromyxobacter sp. (strain Fw109-5).